Here is a 240-residue protein sequence, read N- to C-terminus: Phosphoribosylaminoimidazole-succinocarboxamide synthase (240 aa).

This sequence belongs to the SAICAR synthetase family.

The catalysed reaction is 5-amino-1-(5-phospho-D-ribosyl)imidazole-4-carboxylate + L-aspartate + ATP = (2S)-2-[5-amino-1-(5-phospho-beta-D-ribosyl)imidazole-4-carboxamido]succinate + ADP + phosphate + 2 H(+). It participates in purine metabolism; IMP biosynthesis via de novo pathway; 5-amino-1-(5-phospho-D-ribosyl)imidazole-4-carboxamide from 5-amino-1-(5-phospho-D-ribosyl)imidazole-4-carboxylate: step 1/2. This is Phosphoribosylaminoimidazole-succinocarboxamide synthase from Acidithiobacillus ferrooxidans (strain ATCC 23270 / DSM 14882 / CIP 104768 / NCIMB 8455) (Ferrobacillus ferrooxidans (strain ATCC 23270)).